A 501-amino-acid chain; its full sequence is Acetylcholine receptor subunit beta (501 aa).

A signal peptide spans methionine 1–glycine 23. Over serine 24 to lysine 244 the chain is Extracellular. Cysteine 151 and cysteine 165 form a disulfide bridge. Asparagine 164 is a glycosylation site (N-linked (GlcNAc...) asparagine). 3 helical membrane-spanning segments follow: residues proline 245–leucine 269, methionine 277–alanine 295, and tyrosine 311–leucine 332. The Cytoplasmic portion of the chain corresponds to histidine 333 to arginine 469. A disordered region spans residues arginine 362 to serine 381. Positions proline 363 to histidine 375 are enriched in basic and acidic residues. At tyrosine 390 the chain carries Phosphotyrosine; by Tyr-kinases. A helical transmembrane segment spans residues leucine 470–leucine 488.

It belongs to the ligand-gated ion channel (TC 1.A.9) family. Acetylcholine receptor (TC 1.A.9.1) subfamily. Beta-1/CHRNB1 sub-subfamily. As to quaternary structure, pentamer of two alpha chains, and one each of the beta, delta, and gamma (in immature muscle) or epsilon (in mature muscle) chains. The muscle heteropentamer composed of alpha-1, beta-1, delta, epsilon subunits interacts with the alpha-conotoxin ImII.

It localises to the postsynaptic cell membrane. The protein localises to the cell membrane. It carries out the reaction K(+)(in) = K(+)(out). It catalyses the reaction Na(+)(in) = Na(+)(out). Its function is as follows. After binding acetylcholine, the AChR responds by an extensive change in conformation that affects all subunits and leads to opening of an ion-conducting channel across the plasma membrane. In Rattus norvegicus (Rat), this protein is Acetylcholine receptor subunit beta (Chrnb1).